A 480-amino-acid polypeptide reads, in one-letter code: Protein nucleotidyltransferase YdiU (480 aa).

Residues Gly86, Gly88, Arg89, Lys109, Asp121, Gly122, Arg172, and Arg179 each contribute to the ATP site. Catalysis depends on Asp248, which acts as the Proton acceptor. The Mg(2+) site is built by Asn249 and Asp258. Asp258 lines the ATP pocket.

It belongs to the SELO family. Requires Mg(2+) as cofactor. It depends on Mn(2+) as a cofactor.

It catalyses the reaction L-seryl-[protein] + ATP = 3-O-(5'-adenylyl)-L-seryl-[protein] + diphosphate. The enzyme catalyses L-threonyl-[protein] + ATP = 3-O-(5'-adenylyl)-L-threonyl-[protein] + diphosphate. It carries out the reaction L-tyrosyl-[protein] + ATP = O-(5'-adenylyl)-L-tyrosyl-[protein] + diphosphate. The catalysed reaction is L-histidyl-[protein] + UTP = N(tele)-(5'-uridylyl)-L-histidyl-[protein] + diphosphate. It catalyses the reaction L-seryl-[protein] + UTP = O-(5'-uridylyl)-L-seryl-[protein] + diphosphate. The enzyme catalyses L-tyrosyl-[protein] + UTP = O-(5'-uridylyl)-L-tyrosyl-[protein] + diphosphate. In terms of biological role, nucleotidyltransferase involved in the post-translational modification of proteins. It can catalyze the addition of adenosine monophosphate (AMP) or uridine monophosphate (UMP) to a protein, resulting in modifications known as AMPylation and UMPylation. This Salmonella paratyphi A (strain ATCC 9150 / SARB42) protein is Protein nucleotidyltransferase YdiU.